We begin with the raw amino-acid sequence, 233 residues long: Cell number regulator 8 (233 aa).

Helical transmembrane passes span 85–101 (VCLL…GSNV) and 115–138 (CLPY…APWF).

The protein belongs to the cornifelin family. Expressed in roots, coleoptiles, leaves, stalks, apical meristems, immature ears, embryos, endosperm, pericarp, silks, tassel spikelets and pollen. Highest expression in the pericarp and stalks.

It localises to the membrane. This chain is Cell number regulator 8 (CNR8), found in Zea mays (Maize).